A 433-amino-acid chain; its full sequence is Histidine--tRNA ligase (433 aa).

It belongs to the class-II aminoacyl-tRNA synthetase family. As to quaternary structure, homodimer.

It is found in the cytoplasm. The enzyme catalyses tRNA(His) + L-histidine + ATP = L-histidyl-tRNA(His) + AMP + diphosphate + H(+). The polypeptide is Histidine--tRNA ligase (Crocosphaera subtropica (strain ATCC 51142 / BH68) (Cyanothece sp. (strain ATCC 51142))).